Reading from the N-terminus, the 160-residue chain is Suppressyn (160 aa).

The signal sequence occupies residues 1 to 39; that stretch reads MACIYPTTFYTSLPTKSLNMGISLTTILILSVAVLLSTA. The interval 137–160 is disordered; it reads AKASKPTTPPENRPRHFHSFIQKL.

As to quaternary structure, interacts (secreted) with SLC1A5; mainly at cell surface. Specifically expressed in placenta by extravillous trophoblasts and syncytiotrophoblasts (at protein level).

The protein resides in the secreted. Functionally, may play a role in trophoblasts syncytialization, the spontaneous fusion of their plasma membranes, an essential process in placental development. May negatively regulate cell-cell fusion by interacting with SLC1A5, the probable receptor on the cell surface of the fusogenic syncytin-1/ERVW-1. This Homo sapiens (Human) protein is Suppressyn (ERVH48-1).